The chain runs to 338 residues: Holliday junction branch migration complex subunit RuvB (338 aa).

A compositionally biased stretch (basic and acidic residues) spans 1–14; it reads MENDHGILSDHPSG. A disordered region spans residues 1–21; sequence MENDHGILSDHPSGEEESQVE. Residues 3-185 are large ATPase domain (RuvB-L); sequence NDHGILSDHP…FGIVEHMNYY (183 aa). ATP-binding positions include Leu24, Arg25, Gly66, Lys69, Thr70, Thr71, 132–134, Arg175, Tyr185, and Arg222; that span reads EDY. Thr70 provides a ligand contact to Mg(2+). The interval 186–256 is small ATPAse domain (RuvB-S); sequence TQDELTKIIF…IVKQALSLLQ (71 aa). The tract at residues 259–338 is head domain (RuvB-H); that stretch reads DRGLDEIDRK…LGIEYPTDKN (80 aa). The DNA site is built by Arg314 and Arg319.

Belongs to the RuvB family. Homohexamer. Forms an RuvA(8)-RuvB(12)-Holliday junction (HJ) complex. HJ DNA is sandwiched between 2 RuvA tetramers; dsDNA enters through RuvA and exits via RuvB. An RuvB hexamer assembles on each DNA strand where it exits the tetramer. Each RuvB hexamer is contacted by two RuvA subunits (via domain III) on 2 adjacent RuvB subunits; this complex drives branch migration. In the full resolvosome a probable DNA-RuvA(4)-RuvB(12)-RuvC(2) complex forms which resolves the HJ.

Its subcellular location is the cytoplasm. It carries out the reaction ATP + H2O = ADP + phosphate + H(+). In terms of biological role, the RuvA-RuvB-RuvC complex processes Holliday junction (HJ) DNA during genetic recombination and DNA repair, while the RuvA-RuvB complex plays an important role in the rescue of blocked DNA replication forks via replication fork reversal (RFR). RuvA specifically binds to HJ cruciform DNA, conferring on it an open structure. The RuvB hexamer acts as an ATP-dependent pump, pulling dsDNA into and through the RuvAB complex. RuvB forms 2 homohexamers on either side of HJ DNA bound by 1 or 2 RuvA tetramers; 4 subunits per hexamer contact DNA at a time. Coordinated motions by a converter formed by DNA-disengaged RuvB subunits stimulates ATP hydrolysis and nucleotide exchange. Immobilization of the converter enables RuvB to convert the ATP-contained energy into a lever motion, pulling 2 nucleotides of DNA out of the RuvA tetramer per ATP hydrolyzed, thus driving DNA branch migration. The RuvB motors rotate together with the DNA substrate, which together with the progressing nucleotide cycle form the mechanistic basis for DNA recombination by continuous HJ branch migration. Branch migration allows RuvC to scan DNA until it finds its consensus sequence, where it cleaves and resolves cruciform DNA. In Limosilactobacillus reuteri (strain DSM 20016) (Lactobacillus reuteri), this protein is Holliday junction branch migration complex subunit RuvB.